The following is a 485-amino-acid chain: Probable aspartic-type endopeptidase opsB (485 aa).

Residues 1–20 form the signal peptide; it reads MRHIFSLLSIVCLMVKHGAC. Residues 69-397 form the Peptidase A1 domain; it reads YFCNVTLGTP…DIANNEISIA (329 aa). N-linked (GlcNAc...) asparagine glycosylation is present at asparagine 72. The active site involves aspartate 87. Residues asparagine 99, asparagine 107, asparagine 111, and asparagine 132 are each glycosylated (N-linked (GlcNAc...) asparagine). Aspartate 285 is a catalytic residue. N-linked (GlcNAc...) asparagine glycosylation is found at asparagine 328, asparagine 337, and asparagine 402. The GPI-anchor amidated serine moiety is linked to residue serine 461. Residues 462-485 constitute a propeptide, removed in mature form; it reads AGVARADKQYLAIALIAVWFVLGL.

It belongs to the peptidase A1 family.

The protein localises to the cell membrane. Its function is as follows. Probable GPI-anchored aspartic-type endopeptidase which contributes to virulence. This Aspergillus fumigatus (strain ATCC MYA-4609 / CBS 101355 / FGSC A1100 / Af293) (Neosartorya fumigata) protein is Probable aspartic-type endopeptidase opsB (opsB).